A 154-amino-acid chain; its full sequence is 6,7-dimethyl-8-ribityllumazine synthase (154 aa).

5-amino-6-(D-ribitylamino)uracil-binding positions include phenylalanine 15, 47–49 (TFD), and 71–73 (AVI). 76–77 (ET) is a (2S)-2-hydroxy-3-oxobutyl phosphate binding site. Histidine 79 acts as the Proton donor in catalysis. Leucine 104 provides a ligand contact to 5-amino-6-(D-ribitylamino)uracil. Arginine 119 provides a ligand contact to (2S)-2-hydroxy-3-oxobutyl phosphate.

The protein belongs to the DMRL synthase family.

The enzyme catalyses (2S)-2-hydroxy-3-oxobutyl phosphate + 5-amino-6-(D-ribitylamino)uracil = 6,7-dimethyl-8-(1-D-ribityl)lumazine + phosphate + 2 H2O + H(+). The protein operates within cofactor biosynthesis; riboflavin biosynthesis; riboflavin from 2-hydroxy-3-oxobutyl phosphate and 5-amino-6-(D-ribitylamino)uracil: step 1/2. In terms of biological role, catalyzes the formation of 6,7-dimethyl-8-ribityllumazine by condensation of 5-amino-6-(D-ribitylamino)uracil with 3,4-dihydroxy-2-butanone 4-phosphate. This is the penultimate step in the biosynthesis of riboflavin. The chain is 6,7-dimethyl-8-ribityllumazine synthase from Saccharolobus solfataricus (strain ATCC 35092 / DSM 1617 / JCM 11322 / P2) (Sulfolobus solfataricus).